Reading from the N-terminus, the 625-residue chain is Interferon-induced GTP-binding protein MxE (625 aa).

The Dynamin-type G domain maps to 40 to 313; sequence DLNLPAIAVI…LVEHIAKNLP (274 aa). The tract at residues 50–57 is G1 motif; sequence GDQSSGKS. 50–57 lines the GTP pocket; that stretch reads GDQSSGKS. Positions 75–77 are G2 motif; that stretch reads VTR. Residues 151-154 are G3 motif; that stretch reads DLPG. Residues 151-155 and 220-223 contribute to the GTP site; these read DLPGI and TKPD. Residues 220 to 223 are G4 motif; sequence TKPD. Positions 252–255 are G5 motif; it reads KCRG. The 90-residue stretch at 536–625 folds into the GED domain; it reads VREMAYHLTS…RVLSKFVHSA (90 aa).

Belongs to the TRAFAC class dynamin-like GTPase superfamily. Dynamin/Fzo/YdjA family.

The protein resides in the cytoplasm. This chain is Interferon-induced GTP-binding protein MxE (mxe), found in Danio rerio (Zebrafish).